Reading from the N-terminus, the 1485-residue chain is Chromosome partition protein MukB (1485 aa).

34-41 serves as a coordination point for ATP; it reads GGNGAGKS. Coiled-coil stretches lie at residues 337–480, 509–605, 780–805, 835–915, 977–1116, and 1210–1235; these read LNLV…QAYQ, QHLA…PVWL, RAAR…ATLS, EAEI…IQQH, GMLT…AKAG, and EAIE…KLAI. Positions 666-783 are flexible hinge; sequence PSGAEDARLI…EVPLFGRAAR (118 aa).

It belongs to the SMC family. MukB subfamily. Homodimerization via its hinge domain. Binds to DNA via its C-terminal region. Interacts, and probably forms a ternary complex, with MukE and MukF via its C-terminal region. The complex formation is stimulated by calcium or magnesium. Interacts with tubulin-related protein FtsZ.

It localises to the cytoplasm. It is found in the nucleoid. In terms of biological role, plays a central role in chromosome condensation, segregation and cell cycle progression. Functions as a homodimer, which is essential for chromosome partition. Involved in negative DNA supercoiling in vivo, and by this means organize and compact chromosomes. May achieve or facilitate chromosome segregation by condensation DNA from both sides of a centrally located replisome during cell division. The polypeptide is Chromosome partition protein MukB (Yersinia pestis bv. Antiqua (strain Antiqua)).